A 113-amino-acid polypeptide reads, in one-letter code: Non-specific lipid-transfer protein (113 aa).

Residues Ala1–Ile24 form the signal peptide. 4 cysteine pairs are disulfide-bonded: Cys26–Cys73, Cys36–Cys50, Cys51–Cys96, and Cys71–Cys110. Residue Asp30 is the site of Cis-14-hydroxy-10,13-dioxo-7-heptadecenoic acid aspartate ester attachment.

Belongs to the plant LTP family.

In terms of biological role, plant non-specific lipid-transfer proteins transfer phospholipids as well as galactolipids across membranes. May play a role in wax or cutin deposition in the cell walls of expanding epidermal cells and certain secretory tissues. This is Non-specific lipid-transfer protein from Triticum aestivum (Wheat).